We begin with the raw amino-acid sequence, 485 residues long: GTPase Der (485 aa).

EngA-type G domains follow at residues 3-167 and 176-349; these read PTIA…PEPE and PVFA…NAAM. Residues 9-16, 56-60, 119-122, 182-189, 229-233, and 294-297 each bind GTP; these read GRPNVGKS, DTGGF, NKGE, DTAGV, and NKWD. Residues 350 to 434 form the KH-like domain; sequence IKMPTPKITR…PLRIQYNVSE (85 aa). The interval 435–485 is disordered; it reads NPYENAEDKPKKKPLRRVSLSNRIEKREGRKEEKNRFKKKTKVSVKKQFSK. Basic and acidic residues predominate over residues 457–469; the sequence is RIEKREGRKEEKN. The span at 470–485 shows a compositional bias: basic residues; sequence RFKKKTKVSVKKQFSK.

The protein belongs to the TRAFAC class TrmE-Era-EngA-EngB-Septin-like GTPase superfamily. EngA (Der) GTPase family. Associates with the 50S ribosomal subunit.

Functionally, GTPase that plays an essential role in the late steps of ribosome biogenesis. This Neisseria gonorrhoeae (strain NCCP11945) protein is GTPase Der.